The following is a 369-amino-acid chain: MSASLPLVFDAPRRGMPPRHLADLSADERRAAVTELGEKPFRARQLAHHYFGRLNADVESMTDIPAGSRAKLGADLLPTLLTPVRNLDTDEGTTRKTLWRAHDGTLLESVLMRYPDRATVCISSQAGCGMACPFCATGQGGLQRNLSTAEIVDQVRSAAAMMRDGEVPGGPGRLSNVVFMGMGEPLANYKRVINAVHRICDPAPEGLGLSQRSVTVSTVGLVPAIRRMTAEDLHVTLAVSLHTPDDELRDTLVPVNNRWKVEEVLQAARGYADHTGRRVSIEYALIRDINDQPWRADLLGKLLHKHLGQFVHVNLIPLNPTPGSKWDASPKPVEREFVRRVREAGVPCTVRDTRGQEIAAACGQLAAEE.

Glutamate 108 serves as the catalytic Proton acceptor. A Radical SAM core domain is found at tyrosine 114–glutamate 357. Cysteine 121 and cysteine 362 form a disulfide bridge. 3 residues coordinate [4Fe-4S] cluster: cysteine 128, cysteine 132, and cysteine 135. S-adenosyl-L-methionine contacts are provided by residues glycine 183 to glutamate 184, serine 217, serine 240 to histidine 242, and asparagine 319. The active-site S-methylcysteine intermediate is the cysteine 362.

It belongs to the radical SAM superfamily. RlmN family. [4Fe-4S] cluster serves as cofactor.

It is found in the cytoplasm. It carries out the reaction adenosine(2503) in 23S rRNA + 2 reduced [2Fe-2S]-[ferredoxin] + 2 S-adenosyl-L-methionine = 2-methyladenosine(2503) in 23S rRNA + 5'-deoxyadenosine + L-methionine + 2 oxidized [2Fe-2S]-[ferredoxin] + S-adenosyl-L-homocysteine. It catalyses the reaction adenosine(37) in tRNA + 2 reduced [2Fe-2S]-[ferredoxin] + 2 S-adenosyl-L-methionine = 2-methyladenosine(37) in tRNA + 5'-deoxyadenosine + L-methionine + 2 oxidized [2Fe-2S]-[ferredoxin] + S-adenosyl-L-homocysteine. Its function is as follows. Specifically methylates position 2 of adenine 2503 in 23S rRNA and position 2 of adenine 37 in tRNAs. The polypeptide is Probable dual-specificity RNA methyltransferase RlmN (Saccharopolyspora erythraea (strain ATCC 11635 / DSM 40517 / JCM 4748 / NBRC 13426 / NCIMB 8594 / NRRL 2338)).